Reading from the N-terminus, the 421-residue chain is Type II methyltransferase M.TaqI (421 aa).

Residues Met1 to Leu18 are compositionally biased toward low complexity. The tract at residues Met1–Arg20 is disordered. S-adenosyl-L-methionine contacts are provided by residues Thr23, Glu45–Cys48, Glu71, Asp89, and Pro107.

The protein belongs to the N(4)/N(6)-methyltransferase family.

The catalysed reaction is a 2'-deoxyadenosine in DNA + S-adenosyl-L-methionine = an N(6)-methyl-2'-deoxyadenosine in DNA + S-adenosyl-L-homocysteine + H(+). Functionally, a gamma subtype methylase that recognizes the double-stranded sequence 5'-TCGA-3', methylates A-4 on both strands and protects the DNA from cleavage by the TaqI endonuclease. The polypeptide is Type II methyltransferase M.TaqI (taqIM) (Thermus aquaticus).